A 388-amino-acid polypeptide reads, in one-letter code: Succinate--CoA ligase [ADP-forming] subunit beta (388 aa).

The ATP-grasp domain maps to 9–244 (KQLFAEFGLP…PSQEDEREAH (236 aa)). ATP is bound by residues Lys46, 53 to 55 (GRG), Glu99, Ser102, and Glu107. Positions 199 and 213 each coordinate Mg(2+). Substrate-binding positions include Asn264 and 321 to 323 (GIV).

The protein belongs to the succinate/malate CoA ligase beta subunit family. Heterotetramer of two alpha and two beta subunits. The cofactor is Mg(2+).

It carries out the reaction succinate + ATP + CoA = succinyl-CoA + ADP + phosphate. The enzyme catalyses GTP + succinate + CoA = succinyl-CoA + GDP + phosphate. It functions in the pathway carbohydrate metabolism; tricarboxylic acid cycle; succinate from succinyl-CoA (ligase route): step 1/1. Succinyl-CoA synthetase functions in the citric acid cycle (TCA), coupling the hydrolysis of succinyl-CoA to the synthesis of either ATP or GTP and thus represents the only step of substrate-level phosphorylation in the TCA. The beta subunit provides nucleotide specificity of the enzyme and binds the substrate succinate, while the binding sites for coenzyme A and phosphate are found in the alpha subunit. This chain is Succinate--CoA ligase [ADP-forming] subunit beta, found in Vibrio parahaemolyticus serotype O3:K6 (strain RIMD 2210633).